The following is a 740-amino-acid chain: DNA polymerase iota (740 aa).

The segment at 1–21 is disordered; sequence MEKLGVEPEEEGGGDDDEEDA. Over residues 7–21 the composition is skewed to acidic residues; it reads EPEEEGGGDDDEEDA. The UmuC domain occupies 55–268; that stretch reads IVHVDLDCFY…NHIKEIPGIG (214 aa). Positions 59 and 60 each coordinate Mg(2+). Mn(2+) is bound by residues D59 and L60. A 2'-deoxyribonucleoside 5'-triphosphate is bound by residues Y64 and R96. Residue D151 coordinates Mg(2+). D151 provides a ligand contact to Mn(2+). The active-site Proton acceptor is E152. 2 DNA-binding regions span residues 249–314 and 325–439; these read ESCQ…FGED and QSFS…CNLK. The Ubiquitin-binding 1 (UBM1) motif lies at 527-544; sequence VDQEVFKQLPVDIQEEIL. 2 disordered regions span residues 581 to 615 and 671 to 704; these read PINP…SSYM and NHTT…KITF. A compositionally biased stretch (low complexity) spans 605-615; the sequence is SGFNSSSSSYM. The span at 672–702 shows a compositional bias: basic and acidic residues; the sequence is HTTDSHKQTVATDSHEGLTENREPDSVDEKI. A Ubiquitin-binding 2 (UBM2) motif is present at residues 708 to 725; that stretch reads IDPQVFYELPEAVQKELL.

It belongs to the DNA polymerase type-Y family. Interacts with POLH. Interacts with REV1. Interacts with ubiquitin. The cofactor is Mg(2+). Mn(2+) serves as cofactor. In terms of processing, monoubiquitinated. Protein monoubiquitination prevents POLI binding to ubiquitin via the ubiquitin-binding motif 1 and ubiquitin-binding motif 2. In terms of tissue distribution, ubiquitous. Highly expressed in testis.

Its subcellular location is the nucleus. The catalysed reaction is DNA(n) + a 2'-deoxyribonucleoside 5'-triphosphate = DNA(n+1) + diphosphate. Error-prone DNA polymerase specifically involved in DNA repair. Plays an important role in translesion synthesis, where the normal high-fidelity DNA polymerases cannot proceed and DNA synthesis stalls. Favors Hoogsteen base-pairing in the active site. Inserts the correct base with high-fidelity opposite an adenosine template. Exhibits low fidelity and efficiency opposite a thymidine template, where it will preferentially insert guanosine. May play a role in hypermutation of immunoglobulin genes. Forms a Schiff base with 5'-deoxyribose phosphate at abasic sites, but may not have lyase activity. This is DNA polymerase iota (POLI) from Homo sapiens (Human).